A 172-amino-acid chain; its full sequence is Major exported protein (172 aa).

This sequence belongs to the hcp1 family.

The protein resides in the secreted. This chain is Major exported protein (hcpA), found in Pseudomonas aeruginosa (strain ATCC 15692 / DSM 22644 / CIP 104116 / JCM 14847 / LMG 12228 / 1C / PRS 101 / PAO1).